We begin with the raw amino-acid sequence, 488 residues long: GTPase Der (488 aa).

EngA-type G domains follow at residues 3–166 and 193–366; these read PVIA…PRDP and IKIA…MSAV. GTP is bound by residues 9 to 16, 56 to 60, 118 to 121, 199 to 206, 246 to 250, and 311 to 314; these read GRPNVGKS, DTGGI, NKID, DTAGV, and NKWD. Positions 367-451 constitute a KH-like domain; that stretch reads TRWPTSRLTQ…PIRIEYKGGD (85 aa). Over residues 449–461 the composition is skewed to basic and acidic residues; it reads GGDNPFEGKKNTL. The tract at residues 449 to 488 is disordered; sequence GGDNPFEGKKNTLTDRQVNKKRRLMSHHKKAEKKRRDKRK. Over residues 467–488 the composition is skewed to basic residues; the sequence is NKKRRLMSHHKKAEKKRRDKRK.

It belongs to the TRAFAC class TrmE-Era-EngA-EngB-Septin-like GTPase superfamily. EngA (Der) GTPase family. Associates with the 50S ribosomal subunit.

Its function is as follows. GTPase that plays an essential role in the late steps of ribosome biogenesis. The protein is GTPase Der of Pseudomonas entomophila (strain L48).